Reading from the N-terminus, the 451-residue chain is Phosphoglucosamine mutase (451 aa).

The active-site Phosphoserine intermediate is S107. The Mg(2+) site is built by S107, D246, D248, and D250. S107 is modified (phosphoserine).

It belongs to the phosphohexose mutase family. It depends on Mg(2+) as a cofactor. Post-translationally, activated by phosphorylation.

It carries out the reaction alpha-D-glucosamine 1-phosphate = D-glucosamine 6-phosphate. Its function is as follows. Catalyzes the conversion of glucosamine-6-phosphate to glucosamine-1-phosphate. This chain is Phosphoglucosamine mutase, found in Burkholderia vietnamiensis (strain G4 / LMG 22486) (Burkholderia cepacia (strain R1808)).